The following is a 337-amino-acid chain: G-protein coupled receptor 26 (337 aa).

The Extracellular portion of the chain corresponds to 1–10 (MNSWDAGLAG). A helical transmembrane segment spans residues 11 to 31 (LLVGTIGVSLLSNGLVLLCLL). At 32 to 47 (HSADIRRQAPALFTLN) the chain is on the cytoplasmic side. The helical transmembrane segment at 48–68 (LTCGNLLCTVVNMPLTLAGVV) threads the bilayer. At 69–81 (AQRQPAGDRLCRL) the chain is on the extracellular side. Cysteine 79 and cysteine 156 are disulfide-bonded. A helical transmembrane segment spans residues 82–102 (AAFLDTFLAANSMLSMAALSI). Residues 103-123 (DRWVAVVFPLSYRAKMRLRDA) are Cytoplasmic-facing. A helical membrane pass occupies residues 124-144 (AFMVAYTWLHALTFPATALAL). Topologically, residues 145-168 (SWLGFHQLYASCTLCSRRPDERLR) are extracellular. The chain crosses the membrane as a helical span at residues 169–189 (FAVFTSAFHALSFLLSFIVLC). At 190 to 245 (FTYLKVLKVARFHCKRIDVITMQTLVLLVDIHPSVRERCLEEQKRRRQRATKKIST) the chain is on the cytoplasmic side. Residues 246–266 (FIGTFLVCFAPYVITRLVELF) form a helical membrane-spanning segment. Residues 267–276 (STAPIDSHWG) are Extracellular-facing. A helical membrane pass occupies residues 277–297 (VLSKCLAYSKAASDPFVYSLL). The Cytoplasmic segment spans residues 298–337 (RHQYRRSCKELLNRIFNRRSIHSVGLTGDSHSQNILPVSE).

This sequence belongs to the G-protein coupled receptor 1 family. As to expression, detected in extracts of several brain regions including striatum, pons, cerebellum and cortex. Not detected in numerous peripheral tissue extracts, except in testis. In the brain, detected in cortical structures including the anterior cingulate area, posterior cingulate and the frontoparietal, somatosensory and piriform cortices. Prominent also in the olfactory tubercle, the islands of Calleja, ventromedial and posterior nuclei of the hypothalamus, the medial septal nucleus, nucleus of the diagonal band and the ventral tegmental area. Localized also to hippocampal structures, with signals strongest over the CA2 and CA3 regions of Ammon's horn and less so over the dentate gyrus. Expressed in the caudate putamen only in its most caudal portion, with a decreasing gradient of signal from the dorsal to ventral aspect. Strong expression associated with a single pontine structure, the inferior olivary nucleus.

The protein localises to the cell membrane. In terms of biological role, orphan receptor. Displays a significant level of constitutive activity. Its effect is mediated by G(s)-alpha protein that stimulate adenylate cyclase, resulting in an elevation of intracellular cAMP. In Rattus norvegicus (Rat), this protein is G-protein coupled receptor 26 (Gpr26).